We begin with the raw amino-acid sequence, 169 residues long: Putative lipocalin R877 (169 aa).

Residues 1 to 18 form the signal peptide; the sequence is MWIIILIVIIVIITIIFS.

It belongs to the calycin superfamily. Lipocalin family.

Its subcellular location is the secreted. The protein resides in the virion. Functionally, could play a role in the transport of a small ligand. This is Putative lipocalin R877 from Acanthamoeba polyphaga mimivirus (APMV).